The following is a 335-amino-acid chain: UPF0353 protein MT1528 (335 aa).

2 helical membrane-spanning segments follow: residues 18 to 38 (WFFLFLFVVAGLVALYILMQL) and 67 to 87 (VPAILLVLSLLLFTIAMAGPT). The 197-residue stretch at 98 to 294 (VVMLVIDVSQ…AELRAVYSSL (197 aa)) folds into the VWFA domain. A helical transmembrane segment spans residues 309–329 (VGWLRLGALALALAALAALLI).

It belongs to the UPF0353 family.

It is found in the cell membrane. This Mycobacterium tuberculosis (strain CDC 1551 / Oshkosh) protein is UPF0353 protein MT1528.